Reading from the N-terminus, the 45-residue chain is uncharacterized protein (45 aa).

This is an uncharacterized protein from Treponema pallidum (strain Nichols).